The sequence spans 214 residues: MVERAKILEAVTTAIEKAPKRKFSESIDITINLKNIDMAQPKNRIDETILLPNGTGEKTGICVIGRGDIVTQAKDAKVDLILGPDEVERLGGAPREARRVASSYKYFLAETAVMPQVGRFLGPRLGPRGRMPMPIPGQTDIRPIVERLRNSVKIRTKDKTVFSTKVGSTAMTPEQVSENIDAILKRVESVLEQGHLNVRSVFVKTTMGPSVRLV.

It belongs to the universal ribosomal protein uL1 family. In terms of assembly, part of the 50S ribosomal subunit.

Functionally, binds directly to 23S rRNA. Probably involved in E site tRNA release. Its function is as follows. Protein L1 is also a translational repressor protein, it controls the translation of its operon by binding to its mRNA. The polypeptide is Large ribosomal subunit protein uL1 (Methanoregula boonei (strain DSM 21154 / JCM 14090 / 6A8)).